The sequence spans 337 residues: Eukaryotic translation initiation factor 3 subunit I (337 aa).

WD repeat units lie at residues 8-47 (GHERSLNQIKFNRDGDLIFSVAKDKIVCAWWSANGERLGT), 50-91 (GHQG…KVWD), 147-186 (CTESKATVAGWSYMGKYIIAGHEDGSVSQYDGKTGEQLEN), 191-230 (EFDHQINDIQFSADRTYFITASKDKSAKLMSTRNLAILKT), and 288-327 (GHFGPLNTVHIHPAGTAYASGGEDGYVRVHHFDKPYFDFM).

Belongs to the eIF-3 subunit I family. As to quaternary structure, component of the eukaryotic translation initiation factor 3 (eIF-3) complex.

It is found in the cytoplasm. Its function is as follows. Component of the eukaryotic translation initiation factor 3 (eIF-3) complex, which is involved in protein synthesis of a specialized repertoire of mRNAs and, together with other initiation factors, stimulates binding of mRNA and methionyl-tRNAi to the 40S ribosome. The eIF-3 complex specifically targets and initiates translation of a subset of mRNAs involved in cell proliferation. The chain is Eukaryotic translation initiation factor 3 subunit I (tif34) from Aspergillus niger (strain ATCC MYA-4892 / CBS 513.88 / FGSC A1513).